We begin with the raw amino-acid sequence, 877 residues long: Alanine--tRNA ligase (877 aa).

The Zn(2+) site is built by His562, His566, Cys664, and His668.

Belongs to the class-II aminoacyl-tRNA synthetase family. It depends on Zn(2+) as a cofactor.

It is found in the cytoplasm. The enzyme catalyses tRNA(Ala) + L-alanine + ATP = L-alanyl-tRNA(Ala) + AMP + diphosphate. Functionally, catalyzes the attachment of alanine to tRNA(Ala) in a two-step reaction: alanine is first activated by ATP to form Ala-AMP and then transferred to the acceptor end of tRNA(Ala). Also edits incorrectly charged Ser-tRNA(Ala) and Gly-tRNA(Ala) via its editing domain. This is Alanine--tRNA ligase from Synechocystis sp. (strain ATCC 27184 / PCC 6803 / Kazusa).